The chain runs to 423 residues: Deoxyguanosinetriphosphate triphosphohydrolase-like protein (423 aa).

The region spanning 66-216 is the HD domain; sequence RLTHSLEVAQ…MDFSDDIAYS (151 aa).

Belongs to the dGTPase family. Type 2 subfamily.

This is Deoxyguanosinetriphosphate triphosphohydrolase-like protein from Corynebacterium diphtheriae (strain ATCC 700971 / NCTC 13129 / Biotype gravis).